We begin with the raw amino-acid sequence, 570 residues long: MSMFCYQCQEAAGGRGCTVKGVCGKTEDIAKTQDLIIYVVKGIAIYSSQAREMGLNTSEADKFIVESLFSTITNANFDAKALNARVQKGLKIRQSLKDAIIKAGGSYNSKENKSWTSKFLSVLGIKNDKDEKEIHDAAVWAANNPEDFKKKAETVGVLATENEDIRSLRELLTYGLKGMAAYLEHANNLGYDEDSIHAFMEKALVATLDDTLSADELTALVLECGKYGVDVMALLDKANTSTYGNPEITKVNIGVRNNPGILISGHDLKDMEELLKQTEGTGVDVYTHSEMLPANYYPAFKKYKHFVGNYGNAWWKQNEEFEAFNGPILMTTNCIVTPKASYKDRMYTTGVTGFEGVKHINTSKDGKKDFSEIIEHAKRCTSPKEIEKGEIIGGFAHNQVLALAPQVVDAVKTGAIKRFFVMAGCDGRMKSRNYYTDFAKALPKDTVILTAGCAKYKYNKLDLGDINGIPRVLDAGQCNDSYSLAVIALKLKEVFELEDINELPISYNIAWYEQKAVIVLLALLHLGVKNIHLGPTLPAFLSPNVAKILVENFGIGTISSVDEDIKMFMN.

Cys-5, Cys-8, Cys-17, and Cys-23 together coordinate [4Fe-4S] cluster. Residues His-266, Glu-290, Cys-334, Cys-425, Cys-453, Cys-478, Glu-513, and Lys-515 each contribute to the hybrid [4Fe-2O-2S] cluster site. Cys-425 is modified (cysteine persulfide).

This sequence belongs to the HCP family. It depends on [4Fe-4S] cluster as a cofactor. Hybrid [4Fe-2O-2S] cluster serves as cofactor.

It localises to the cytoplasm. The catalysed reaction is A + NH4(+) + H2O = hydroxylamine + AH2 + H(+). Its function is as follows. Catalyzes the reduction of hydroxylamine to form NH(3) and H(2)O. This chain is Hydroxylamine reductase, found in Clostridium botulinum (strain Kyoto / Type A2).